The sequence spans 675 residues: DNA ligase 1 (675 aa).

NAD(+) is bound by residues 34–38 (DFEYD), 83–84 (SL), and Glu-114. The active-site N6-AMP-lysine intermediate is the Lys-116. Residues Arg-137, Glu-177, Lys-295, and Lys-319 each contribute to the NAD(+) site. Zn(2+) is bound by residues Cys-413, Cys-416, Cys-431, and Cys-436. A BRCT domain is found at 596–675 (NSGSALAGKT…AEFLRLLSGG (80 aa)).

Belongs to the NAD-dependent DNA ligase family. LigA subfamily. The cofactor is Mg(2+). Mn(2+) serves as cofactor.

It catalyses the reaction NAD(+) + (deoxyribonucleotide)n-3'-hydroxyl + 5'-phospho-(deoxyribonucleotide)m = (deoxyribonucleotide)n+m + AMP + beta-nicotinamide D-nucleotide.. Functionally, DNA ligase that catalyzes the formation of phosphodiester linkages between 5'-phosphoryl and 3'-hydroxyl groups in double-stranded DNA using NAD as a coenzyme and as the energy source for the reaction. It is essential for DNA replication and repair of damaged DNA. This Opitutus terrae (strain DSM 11246 / JCM 15787 / PB90-1) protein is DNA ligase 1.